We begin with the raw amino-acid sequence, 285 residues long: Acetylglutamate kinase (285 aa).

Substrate is bound by residues glycine 55–glycine 56, arginine 77, and asparagine 171.

The protein belongs to the acetylglutamate kinase family. ArgB subfamily.

It is found in the cytoplasm. The catalysed reaction is N-acetyl-L-glutamate + ATP = N-acetyl-L-glutamyl 5-phosphate + ADP. It participates in amino-acid biosynthesis; L-arginine biosynthesis; N(2)-acetyl-L-ornithine from L-glutamate: step 2/4. Catalyzes the ATP-dependent phosphorylation of N-acetyl-L-glutamate. The protein is Acetylglutamate kinase of Chlorobaculum tepidum (strain ATCC 49652 / DSM 12025 / NBRC 103806 / TLS) (Chlorobium tepidum).